Here is a 280-residue protein sequence, read N- to C-terminus: Elongation factor Ts (280 aa).

The tract at residues 79–82 (TDFV) is involved in Mg(2+) ion dislocation from EF-Tu.

It belongs to the EF-Ts family.

It localises to the cytoplasm. Its function is as follows. Associates with the EF-Tu.GDP complex and induces the exchange of GDP to GTP. It remains bound to the aminoacyl-tRNA.EF-Tu.GTP complex up to the GTP hydrolysis stage on the ribosome. The protein is Elongation factor Ts of Vibrio vulnificus (strain CMCP6).